The sequence spans 346 residues: Uroporphyrinogen decarboxylase (346 aa).

Substrate is bound by residues 26 to 30 (RQAGR), phenylalanine 45, aspartate 76, tyrosine 153, serine 208, and histidine 323.

This sequence belongs to the uroporphyrinogen decarboxylase family. Homodimer.

It is found in the cytoplasm. The catalysed reaction is uroporphyrinogen III + 4 H(+) = coproporphyrinogen III + 4 CO2. The protein operates within porphyrin-containing compound metabolism; protoporphyrin-IX biosynthesis; coproporphyrinogen-III from 5-aminolevulinate: step 4/4. In terms of biological role, catalyzes the decarboxylation of four acetate groups of uroporphyrinogen-III to yield coproporphyrinogen-III. The sequence is that of Uroporphyrinogen decarboxylase from Prochlorococcus marinus subsp. pastoris (strain CCMP1986 / NIES-2087 / MED4).